An 86-amino-acid polypeptide reads, in one-letter code: Small ribosomal subunit protein bS20 (86 aa).

The interval 1–27 (MANNKSAKKRAIQAEKRRQHNASRRSM) is disordered.

Belongs to the bacterial ribosomal protein bS20 family.

Binds directly to 16S ribosomal RNA. This chain is Small ribosomal subunit protein bS20, found in Vibrio cholerae serotype O1 (strain ATCC 39541 / Classical Ogawa 395 / O395).